The following is a 240-amino-acid chain: Phosphatidylserine decarboxylase proenzyme (240 aa).

Catalysis depends on S198, which acts as the Schiff-base intermediate with substrate; via pyruvic acid. Position 198 is a pyruvic acid (Ser); by autocatalysis (S198).

Belongs to the phosphatidylserine decarboxylase family. PSD-A subfamily. Heterodimer of a large membrane-associated beta subunit and a small pyruvoyl-containing alpha subunit. It depends on pyruvate as a cofactor. In terms of processing, is synthesized initially as an inactive proenzyme. Formation of the active enzyme involves a self-maturation process in which the active site pyruvoyl group is generated from an internal serine residue via an autocatalytic post-translational modification. Two non-identical subunits are generated from the proenzyme in this reaction, and the pyruvate is formed at the N-terminus of the alpha chain, which is derived from the carboxyl end of the proenzyme. The post-translation cleavage follows an unusual pathway, termed non-hydrolytic serinolysis, in which the side chain hydroxyl group of the serine supplies its oxygen atom to form the C-terminus of the beta chain, while the remainder of the serine residue undergoes an oxidative deamination to produce ammonia and the pyruvoyl prosthetic group on the alpha chain.

The protein localises to the cell membrane. It carries out the reaction a 1,2-diacyl-sn-glycero-3-phospho-L-serine + H(+) = a 1,2-diacyl-sn-glycero-3-phosphoethanolamine + CO2. It functions in the pathway phospholipid metabolism; phosphatidylethanolamine biosynthesis; phosphatidylethanolamine from CDP-diacylglycerol: step 2/2. Its function is as follows. Catalyzes the formation of phosphatidylethanolamine (PtdEtn) from phosphatidylserine (PtdSer). The polypeptide is Phosphatidylserine decarboxylase proenzyme (Paramagnetospirillum magneticum (strain ATCC 700264 / AMB-1) (Magnetospirillum magneticum)).